The chain runs to 228 residues: Probable C4-dicarboxylate response regulator DctR (228 aa).

The Response regulatory domain occupies 7 to 123 (TVLLIEDDPM…RMKQALEQYR (117 aa)). A 4-aspartylphosphate modification is found at D58. Positions 180–199 (AEEVADGVGIARVTARRYLE) form a DNA-binding region, H-T-H motif.

Phosphorylated by DctS.

It is found in the cytoplasm. Functionally, member of the two-component regulatory system DctS/DctR. Essential for expression of DctP. This is Probable C4-dicarboxylate response regulator DctR (dctR) from Priestia megaterium (Bacillus megaterium).